The following is a 154-amino-acid chain: Plastocyanin, chloroplastic (154 aa).

A chloroplast-targeting transit peptide spans M1–A57. The 97-residue stretch at Q58–N154 folds into the Plastocyanin-like domain. Cu cation contacts are provided by H94, C139, H142, and M147.

The protein belongs to the plastocyanin family. It depends on Cu(2+) as a cofactor.

It is found in the plastid. The protein resides in the chloroplast thylakoid membrane. Participates in electron transfer between P700 and the cytochrome b6-f complex in photosystem I. The protein is Plastocyanin, chloroplastic (PETE) of Oryza sativa subsp. indica (Rice).